The chain runs to 128 residues: Conopressin-conophysin (128 aa).

The first 27 residues, 1 to 27 (MTRSAMQMGRLTLVLCLLLLLLLTTQA), serve as a signal peptide directing secretion. Cys-28 and Cys-33 are disulfide-bonded. Gly-36 is subject to Glycine amide. A propeptide spanning residues 37–44 (GKRDVDER) is cleaved from the precursor. Cystine bridges form between Cys-50–Cys-90, Cys-53–Cys-64, Cys-58–Cys-80, Cys-65–Cys-70, Cys-97–Cys-115, Cys-109–Cys-127, and Cys-116–Cys-121.

The protein belongs to the vasopressin/oxytocin family. Expressed by the venom gland.

The protein localises to the secreted. Functionally, targets vasopressin-oxytocin related receptors. Is more active on fish receptors than on their human counterparts, supporting an evolved role of this conopressin in the envenomation process. Acts as an agonist on zebrafish vasopressin receptors V1a1R (EC(50)=10.6 nM), V1a2R (EC(50)=44.06 nM, partial agonist), V2R (EC(50)=299.2 nM) and oxytocin receptor (EC(50)=353.73 nM, partial agonist). Shows a weaker activity on human receptors AVPR1B (EC(50)=51.92 nM), AVPR1A (EC(50)=123.78 nM), AVPR2 (EC(50)=299.2 nM) and oxytocin (OXTR) receptor (EC(50)=455.66 nM, partial agonist). In vivo, exhibits grooming and scratching behavior in mice, following intracerebral injection. This is Conopressin-conophysin from Conus geographus (Geography cone).